We begin with the raw amino-acid sequence, 359 residues long: Membrane-bound lytic murein transglycosylase C (359 aa).

An N-terminal signal peptide occupies residues 1-16 (MKKYLALALIAPLLIS). Cys-17 is lipidated: N-palmitoyl cysteine. Cys-17 carries the S-diacylglycerol cysteine lipid modification.

It belongs to the transglycosylase Slt family.

Its subcellular location is the cell outer membrane. The enzyme catalyses Exolytic cleavage of the (1-&gt;4)-beta-glycosidic linkage between N-acetylmuramic acid (MurNAc) and N-acetylglucosamine (GlcNAc) residues in peptidoglycan, from either the reducing or the non-reducing ends of the peptidoglycan chains, with concomitant formation of a 1,6-anhydrobond in the MurNAc residue.. Its function is as follows. Murein-degrading enzyme. May play a role in recycling of muropeptides during cell elongation and/or cell division. The sequence is that of Membrane-bound lytic murein transglycosylase C from Escherichia coli O81 (strain ED1a).